The following is a 473-amino-acid chain: Uronate isomerase (473 aa).

This sequence belongs to the metallo-dependent hydrolases superfamily. Uronate isomerase family.

It catalyses the reaction D-glucuronate = D-fructuronate. The catalysed reaction is aldehydo-D-galacturonate = keto-D-tagaturonate. The protein operates within carbohydrate metabolism; pentose and glucuronate interconversion. The protein is Uronate isomerase of Bacillus licheniformis (strain ATCC 14580 / DSM 13 / JCM 2505 / CCUG 7422 / NBRC 12200 / NCIMB 9375 / NCTC 10341 / NRRL NRS-1264 / Gibson 46).